The chain runs to 415 residues: Putative serpin-Z6C (415 aa).

The segment at 357–381 (GTEAAAATAVCLTFASAAPSSRRPA) is RCL.

This sequence belongs to the serpin family.

Functionally, probable serine protease inhibitor. This is Putative serpin-Z6C from Oryza sativa subsp. japonica (Rice).